Here is a 393-residue protein sequence, read N- to C-terminus: Major outer membrane porin, serovar D (393 aa).

A signal peptide spans 1-22 (MKKLLKSVLVFAALSSASSLQA).

This sequence belongs to the chlamydial porin (CP) (TC 1.B.2) family. Part of a disulfide cross-linked outer membrane complex (COMC) composed of the major outer membrane porin (MOMP), the small cysteine-rich protein (OmcA) and the large cysteine-rich periplasmic protein (OmcB).

Its subcellular location is the cell outer membrane. In elementary bodies (EBs, the infectious stage, which is able to survive outside the host cell) provides the structural integrity of the outer envelope through disulfide cross-links with the small cysteine-rich protein and the large cysteine-rich periplasmic protein. It has been described in publications as the Sarkosyl-insoluble COMC (Chlamydia outer membrane complex), and serves as the functional equivalent of peptidoglycan. Its function is as follows. Permits diffusion of specific solutes through the outer membrane. The protein is Major outer membrane porin, serovar D (ompA) of Chlamydia trachomatis serovar D (strain ATCC VR-885 / DSM 19411 / UW-3/Cx).